Reading from the N-terminus, the 424-residue chain is UPF0597 protein Shew185_3080 (424 aa).

The protein belongs to the UPF0597 family.

The polypeptide is UPF0597 protein Shew185_3080 (Shewanella baltica (strain OS185)).